The primary structure comprises 640 residues: Probable serine/threonine-protein kinase samkA (640 aa).

The SAM domain occupies 21–84 (WNNEKIIKWL…SEFEILKNNY (64 aa)). Positions 73–100 (FKSEFEILKNNYDNNNNNNNNNNNNNNN) form a coiled coil. Positions 84–165 (YDNNNNNNNN…INFNSNSNIT (82 aa)) are disordered. Residues 191–437 (YEYVESISLG…SKDLQKLSWF (247 aa)) enclose the Protein kinase domain. ATP contacts are provided by residues 197–205 (ISLGVFSVV) and Lys-221. Asp-312 functions as the Proton acceptor in the catalytic mechanism. Residues 448–482 (QELTKSTTNTTTTTTTTTTPPPPPSPSSSSPSMNE) are disordered. Residues 453 to 465 (STTNTTTTTTTTT) are compositionally biased toward low complexity.

The protein belongs to the protein kinase superfamily. Ser/Thr protein kinase family.

It catalyses the reaction L-seryl-[protein] + ATP = O-phospho-L-seryl-[protein] + ADP + H(+). The catalysed reaction is L-threonyl-[protein] + ATP = O-phospho-L-threonyl-[protein] + ADP + H(+). The chain is Probable serine/threonine-protein kinase samkA (samkA) from Dictyostelium discoideum (Social amoeba).